Reading from the N-terminus, the 91-residue chain is Small ribosomal subunit protein bS18 (91 aa).

It belongs to the bacterial ribosomal protein bS18 family. Part of the 30S ribosomal subunit. Forms a tight heterodimer with protein bS6.

Binds as a heterodimer with protein bS6 to the central domain of the 16S rRNA, where it helps stabilize the platform of the 30S subunit. The polypeptide is Small ribosomal subunit protein bS18 (Paraburkholderia xenovorans (strain LB400)).